Reading from the N-terminus, the 122-residue chain is Modulator protein MzrA (122 aa).

Over 1 to 10 the chain is Cytoplasmic; the sequence is MKILTRIPRR. A helical transmembrane segment spans residues 11 to 31; the sequence is LLPWLLGGALALVAVSFAPAL. The Periplasmic portion of the chain corresponds to 32–122; that stretch reads LSHETVVQIR…NQDANRSIYS (91 aa).

The protein belongs to the MzrA family. In terms of assembly, interacts with EnvZ.

The protein localises to the cell inner membrane. Its function is as follows. Modulates the activity of the EnvZ/OmpR two-component regulatory system, probably by directly modulating EnvZ enzymatic activity and increasing stability of phosphorylated OmpR. The sequence is that of Modulator protein MzrA from Pantoea sp. (strain At-9b).